A 323-amino-acid polypeptide reads, in one-letter code: tRNA dimethylallyltransferase (323 aa).

An ATP-binding site is contributed by 27 to 34 (GPTGSGKT). 29 to 34 (TGSGKT) is a substrate binding site. Interaction with substrate tRNA regions lie at residues 52–55 (DSRQ) and 176–180 (QRIVR).

It belongs to the IPP transferase family. Monomer. Requires Mg(2+) as cofactor.

The enzyme catalyses adenosine(37) in tRNA + dimethylallyl diphosphate = N(6)-dimethylallyladenosine(37) in tRNA + diphosphate. Its function is as follows. Catalyzes the transfer of a dimethylallyl group onto the adenine at position 37 in tRNAs that read codons beginning with uridine, leading to the formation of N6-(dimethylallyl)adenosine (i(6)A). This chain is tRNA dimethylallyltransferase, found in Desulfovibrio desulfuricans (strain ATCC 27774 / DSM 6949 / MB).